Consider the following 389-residue polypeptide: Probable nitrate transporter NarT (389 aa).

A run of 12 helical transmembrane segments spans residues 14–34, 45–65, 69–89, 97–117, 139–159, 161–181, 211–231, 246–266, 268–288, 294–314, 331–351, and 353–373; these read TLSLVVGFMAWSIIAPLMPFI, ISIILAIPVILGSVLRVPFGY, IVGAKWVFFTSFIVLLFPIFF, GMLMASGFFLGVGGAIFSVGV, GNIGTAVSSFLAPPIAGIIGW, TTVRSYLIIIALFALIMFIFG, WYFITFGAFVAFGIFLPNYLV, GVFIALATFLRPIGGILGDKF, AVKVLMIDFVIMIIGAVILGI, LFTVGCLTISICAGIGNGLIF, IVSMMGGLGGFFPPLVITYVA, and LTGSSHLAFIFLAVFGCIALF.

This sequence belongs to the major facilitator superfamily. Nitrate/nitrite porter (TC 2.A.1.8) family.

It localises to the cell membrane. Probably required for nitrate uptake under anoxic conditions. Also possibly involved in excretion of nitrite produced by the dissimilatory reduction of nitrate. The sequence is that of Probable nitrate transporter NarT (narT) from Staphylococcus aureus (strain JH9).